Consider the following 496-residue polypeptide: Catalase isozyme 3 (496 aa).

The disordered stretch occupies residues 1 to 25 (MTMDPTKFRPSSSHDTTVTTTNAGA). The segment covering 9-23 (RPSSSHDTTVTTTNA) has biased composition (polar residues). Active-site residues include H67 and N140. Y351 contributes to the heme binding site. Residues 402-422 (PLRQAAPPTPLPPRPVAGRRE) form a disordered region.

Belongs to the catalase family. As to quaternary structure, homotetramer. Requires heme as cofactor. In terms of tissue distribution, leaf mesophyll cells, pericarp, seedling roots and the coleoptile.

Its subcellular location is the mitochondrion. It carries out the reaction 2 H2O2 = O2 + 2 H2O. Occurs in almost all aerobically respiring organisms and serves to protect cells from the toxic effects of hydrogen peroxide. Its levels are highest in the light period and are lowest in the dark period, hence it may be important for scavenging hydrogen peroxide at night, rather than during the day. This Zea mays (Maize) protein is Catalase isozyme 3 (CAT3).